The primary structure comprises 380 residues: Phosphate acyltransferase (380 aa).

The tract at residues methionine 1–glycine 23 is disordered.

Belongs to the PlsX family. Homodimer. Probably interacts with PlsY.

It is found in the cytoplasm. It carries out the reaction a fatty acyl-[ACP] + phosphate = an acyl phosphate + holo-[ACP]. The protein operates within lipid metabolism; phospholipid metabolism. Catalyzes the reversible formation of acyl-phosphate (acyl-PO(4)) from acyl-[acyl-carrier-protein] (acyl-ACP). This enzyme utilizes acyl-ACP as fatty acyl donor, but not acyl-CoA. This is Phosphate acyltransferase from Acidiphilium cryptum (strain JF-5).